The following is a 662-amino-acid chain: DNA topoisomerase 4 subunit B (662 aa).

ATP contacts are provided by residues tyrosine 20, asparagine 60, aspartate 87, glycine 129–isoleucine 135, and lysine 359. A Toprim domain is found at threonine 439 to proline 553. Residues glutamate 445, aspartate 518, and aspartate 520 each contribute to the Mg(2+) site.

The protein belongs to the type II topoisomerase family. ParE type 1 subfamily. Heterotetramer composed of ParC and ParE. It depends on Mg(2+) as a cofactor. Mn(2+) is required as a cofactor. The cofactor is Ca(2+).

The enzyme catalyses ATP-dependent breakage, passage and rejoining of double-stranded DNA.. Functionally, topoisomerase IV is essential for chromosome segregation. It relaxes supercoiled DNA. Performs the decatenation events required during the replication of a circular DNA molecule. This Rickettsia conorii (strain ATCC VR-613 / Malish 7) protein is DNA topoisomerase 4 subunit B.